The sequence spans 79 residues: ATP synthase subunit c (79 aa).

2 consecutive transmembrane segments (helical) span residues 11-31 and 53-73; these read MAAA…IGIL and FFIV…LGLY.

Belongs to the ATPase C chain family. As to quaternary structure, F-type ATPases have 2 components, F(1) - the catalytic core - and F(0) - the membrane proton channel. F(1) has five subunits: alpha(3), beta(3), gamma(1), delta(1), epsilon(1). F(0) has three main subunits: a(1), b(2) and c(10-14). The alpha and beta chains form an alternating ring which encloses part of the gamma chain. F(1) is attached to F(0) by a central stalk formed by the gamma and epsilon chains, while a peripheral stalk is formed by the delta and b chains.

It is found in the cell inner membrane. Functionally, f(1)F(0) ATP synthase produces ATP from ADP in the presence of a proton or sodium gradient. F-type ATPases consist of two structural domains, F(1) containing the extramembraneous catalytic core and F(0) containing the membrane proton channel, linked together by a central stalk and a peripheral stalk. During catalysis, ATP synthesis in the catalytic domain of F(1) is coupled via a rotary mechanism of the central stalk subunits to proton translocation. In terms of biological role, key component of the F(0) channel; it plays a direct role in translocation across the membrane. A homomeric c-ring of between 10-14 subunits forms the central stalk rotor element with the F(1) delta and epsilon subunits. The sequence is that of ATP synthase subunit c from Citrobacter koseri (strain ATCC BAA-895 / CDC 4225-83 / SGSC4696).